The following is a 106-amino-acid chain: Guanyl-specific ribonuclease Th1 (106 aa).

Intrachain disulfides connect C5–C103 and C23–C84. The active site involves H39. E58 (proton acceptor) is an active-site residue. H92 (proton donor) is an active-site residue.

This sequence belongs to the ribonuclease N1/T1 family.

The enzyme catalyses [RNA] containing guanosine + H2O = an [RNA fragment]-3'-guanosine-3'-phosphate + a 5'-hydroxy-ribonucleotide-3'-[RNA fragment].. This Trichoderma harzianum (Hypocrea lixii) protein is Guanyl-specific ribonuclease Th1.